The primary structure comprises 174 residues: ATP synthase subunit delta (174 aa).

It belongs to the ATPase delta chain family. In terms of assembly, F-type ATPases have 2 components, F(1) - the catalytic core - and F(0) - the membrane proton channel. F(1) has five subunits: alpha(3), beta(3), gamma(1), delta(1), epsilon(1). F(0) has three main subunits: a(1), b(2) and c(10-14). The alpha and beta chains form an alternating ring which encloses part of the gamma chain. F(1) is attached to F(0) by a central stalk formed by the gamma and epsilon chains, while a peripheral stalk is formed by the delta and b chains.

The protein resides in the cell inner membrane. In terms of biological role, f(1)F(0) ATP synthase produces ATP from ADP in the presence of a proton or sodium gradient. F-type ATPases consist of two structural domains, F(1) containing the extramembraneous catalytic core and F(0) containing the membrane proton channel, linked together by a central stalk and a peripheral stalk. During catalysis, ATP synthesis in the catalytic domain of F(1) is coupled via a rotary mechanism of the central stalk subunits to proton translocation. This protein is part of the stalk that links CF(0) to CF(1). It either transmits conformational changes from CF(0) to CF(1) or is implicated in proton conduction. The polypeptide is ATP synthase subunit delta (Fusobacterium nucleatum subsp. nucleatum (strain ATCC 25586 / DSM 15643 / BCRC 10681 / CIP 101130 / JCM 8532 / KCTC 2640 / LMG 13131 / VPI 4355)).